The primary structure comprises 146 residues: Basic phospholipase A2 beta-bungarotoxin A2 chain (146 aa).

Positions 1–19 are cleaved as a signal peptide; sequence MNPAHLLVLSAVCVSLLGA. A propeptide spanning residues 20–27 is cleaved from the precursor; sequence SNIPPQSL. Disulfide bonds link C54-C145, C56-C72, C71-C126, C78-C119, C87-C112, and C105-C117. 3 residues coordinate Ca(2+): Y55, G57, and G59. The active site involves H75. Residue D76 coordinates Ca(2+). The active site involves D120.

It belongs to the phospholipase A2 family. Group I subfamily. D49 sub-subfamily. As to quaternary structure, heterodimer; disulfide-linked. The A chain has phospholipase A2 activity and the B chain shows homology with the basic protease inhibitors. Ca(2+) is required as a cofactor. Expressed by the venom gland.

It localises to the secreted. The enzyme catalyses a 1,2-diacyl-sn-glycero-3-phosphocholine + H2O = a 1-acyl-sn-glycero-3-phosphocholine + a fatty acid + H(+). In terms of biological role, snake venom phospholipase A2 (PLA2) that inhibits neuromuscular transmission by blocking acetylcholine release from the nerve termini. PLA2 catalyzes the calcium-dependent hydrolysis of the 2-acyl groups in 3-sn-phosphoglycerides. The sequence is that of Basic phospholipase A2 beta-bungarotoxin A2 chain from Bungarus flaviceps flaviceps (Red-headed krait).